The chain runs to 193 residues: Hypoxanthine/guanine phosphoribosyltransferase (193 aa).

It belongs to the purine/pyrimidine phosphoribosyltransferase family. Archaeal HPRT subfamily. As to quaternary structure, homodimer.

The protein resides in the cytoplasm. The catalysed reaction is IMP + diphosphate = hypoxanthine + 5-phospho-alpha-D-ribose 1-diphosphate. It catalyses the reaction GMP + diphosphate = guanine + 5-phospho-alpha-D-ribose 1-diphosphate. It participates in purine metabolism; IMP biosynthesis via salvage pathway; IMP from hypoxanthine: step 1/1. In terms of biological role, catalyzes a salvage reaction resulting in the formation of IMP that is energically less costly than de novo synthesis. Prefers hypoxanthine, has 66% activity with guanine while activity with adenine, xanthine, uracil, orotate, or cytosine is negligible. The protein is Hypoxanthine/guanine phosphoribosyltransferase of Methanothermobacter marburgensis (strain ATCC BAA-927 / DSM 2133 / JCM 14651 / NBRC 100331 / OCM 82 / Marburg) (Methanobacterium thermoautotrophicum).